We begin with the raw amino-acid sequence, 237 residues long: Regulator of G-protein signaling 9-binding protein (237 aa).

Residues 1–214 (MAKEECKALL…TGPCDLSKAK (214 aa)) are Cytoplasmic-facing. Coiled coils occupy residues 29–58 (GSAD…RLRL) and 144–169 (VEDL…MKVN). Residues 153 to 202 (EILQVGEMIQDMEMKVNVPRWTVQARQAAGAELLSSASAGVSSVGGVSVE) are SNARE-like. A helical; Anchor for type IV membrane protein transmembrane segment spans residues 215 to 234 (AATIFSAVLLAAVALAVCVA). Residues 235–237 (KLS) lie on the Extracellular side of the membrane.

The protein belongs to the RGS7BP/RGS9BP family. As to quaternary structure, specifically interacts with isoform RGS9-1 of RGS9. Component of the RGS9-1-Gbeta5 complex composed of RGS9-1, Gbeta5 (GNB5) and RGS9BP. As to expression, specifically expressed in the retina. Only present in photoreceptors (at protein level).

Its subcellular location is the membrane. In terms of biological role, regulator of G protein-coupled receptor (GPCR) signaling in phototransduction. Participates in the recovery phase of visual transduction via its interaction with RGS9-1 isoform. Acts as a membrane-anchor that mediates the targeting of RGS9-1 to the photoreceptor outer segment, where phototransduction takes place. Enhances the ability of RGS9-1 to stimulate G protein GTPase activity, allowing the visual signal to be terminated on the physiologically time scale. It also controls the proteolytic stability of RGS9-1, probably by protecting it from degradation. The polypeptide is Regulator of G-protein signaling 9-binding protein (RGS9BP) (Bos taurus (Bovine)).